Here is a 209-residue protein sequence, read N- to C-terminus: Ribosomal RNA large subunit methyltransferase E (209 aa).

S-adenosyl-L-methionine contacts are provided by G63, W65, D83, D99, and D124. The active-site Proton acceptor is K164.

It belongs to the class I-like SAM-binding methyltransferase superfamily. RNA methyltransferase RlmE family.

The protein resides in the cytoplasm. It carries out the reaction uridine(2552) in 23S rRNA + S-adenosyl-L-methionine = 2'-O-methyluridine(2552) in 23S rRNA + S-adenosyl-L-homocysteine + H(+). Its function is as follows. Specifically methylates the uridine in position 2552 of 23S rRNA at the 2'-O position of the ribose in the fully assembled 50S ribosomal subunit. The protein is Ribosomal RNA large subunit methyltransferase E of Shewanella putrefaciens (strain CN-32 / ATCC BAA-453).